Here is a 315-residue protein sequence, read N- to C-terminus: Probable cytochrome c oxidase subunit 2 (315 aa).

Residues 6-53 form the RPE1 insert domain; that stretch reads RHLSKPAYREEFKGDTSPRTAAYISNRADASLGSTYKLPLEAKFWKMS. 3 helical membrane passes run 41 to 61, 96 to 116, and 133 to 153; these read YKLP…CFLI, LLYI…FVCI, and VLIE…IAVP. His-235, Cys-270, Cys-274, and His-278 together coordinate Cu cation.

Belongs to the cytochrome c oxidase subunit 2 family. It depends on Cu cation as a cofactor. The cofactor is heme.

Its subcellular location is the cell membrane. The catalysed reaction is 4 Fe(II)-[cytochrome c] + O2 + 8 H(+)(in) = 4 Fe(III)-[cytochrome c] + 2 H2O + 4 H(+)(out). Its function is as follows. Subunits I and II form the functional core of the enzyme complex. Electrons originating in cytochrome c are transferred via heme a and Cu(A) to the binuclear center formed by heme a3 and Cu(B). This Rickettsia felis (strain ATCC VR-1525 / URRWXCal2) (Rickettsia azadi) protein is Probable cytochrome c oxidase subunit 2 (ctaC).